A 506-amino-acid polypeptide reads, in one-letter code: Aldehyde dehydrogenase (506 aa).

240–245 (GSTEIG) is a binding site for NAD(+). Active-site residues include E262 and C301.

Belongs to the aldehyde dehydrogenase family.

The catalysed reaction is an aldehyde + NAD(+) + H2O = a carboxylate + NADH + 2 H(+). It participates in alcohol metabolism; ethanol degradation; acetate from ethanol: step 2/2. Its function is as follows. May be involved in V.cholerae virulence, as its expression is under the control of ToxR, a transcriptional activator of several genes associated with virulence. This is Aldehyde dehydrogenase (aldA) from Vibrio cholerae serotype O1 (strain ATCC 39541 / Classical Ogawa 395 / O395).